We begin with the raw amino-acid sequence, 121 residues long: Small ribosomal subunit protein uS13 (121 aa).

Positions 91 to 121 are disordered; sequence HRRGLPVRGQNSKNNARTRKGPRRTVANKKK. Residues 106 to 121 are compositionally biased toward basic residues; that stretch reads ARTRKGPRRTVANKKK.

Belongs to the universal ribosomal protein uS13 family. In terms of assembly, part of the 30S ribosomal subunit. Forms a loose heterodimer with protein S19. Forms two bridges to the 50S subunit in the 70S ribosome.

Located at the top of the head of the 30S subunit, it contacts several helices of the 16S rRNA. In the 70S ribosome it contacts the 23S rRNA (bridge B1a) and protein L5 of the 50S subunit (bridge B1b), connecting the 2 subunits; these bridges are implicated in subunit movement. Contacts the tRNAs in the A and P-sites. In Bacillus cereus (strain G9842), this protein is Small ribosomal subunit protein uS13.